We begin with the raw amino-acid sequence, 285 residues long: E2F-associated phosphoprotein (285 aa).

An N-acetylmethionine modification is found at Met1. The segment at 1 to 30 is disordered; sequence MNRLPDDYDPYAVEEPSDEEPALSSSEDEV. Residues 15 to 30 are compositionally biased toward acidic residues; it reads EPSDEEPALSSSEDEV. Ser17 carries the phosphoserine modification. Phosphothreonine is present on Thr37. The segment at 48 to 96 is disordered; sequence CLTGESESSSEDEFEKEMEAELNSTMKTMEDKLSSLGTGSSSGNGKVAT. The segment covering 55-67 has biased composition (acidic residues); sequence SSSEDEFEKEMEA. Residues 81–92 are compositionally biased toward low complexity; it reads SSLGTGSSSGNG. A phosphoserine mark is found at Ser109 and Ser111. Positions 118–144 are disordered; it reads VQVTKKKKKKQHKIPTNDELLYDPEKD. Positions 121–130 are enriched in basic residues; sequence TKKKKKKQHK.

As to quaternary structure, interacts with E2F1. The C-terminal half binds the N-terminal of E2F1. Also interacts with E2F2 and E2F3, but not E2F4. As to expression, ubiquitously expressed. Highest levels in heart, placenta, skeletal muscle and pancreas. Lower levels in brain, lung and kidney. In the brain, expressed in all regions with high levels in the cerebellum and cerebral cortex. Expressed in COS1 and transformed skin fibroblasts.

It is found in the cytoplasm. The protein localises to the nucleus. In terms of biological role, may play an important role in the fine-tuning of both major E2F1 activities, the regulation of the cell-cycle and the induction of apoptosis. Promotes S-phase entry, and inhibits p14(ARP) expression. This is E2F-associated phosphoprotein (EAPP) from Homo sapiens (Human).